A 322-amino-acid polypeptide reads, in one-letter code: Polyisoprenyl-teichoic acid--peptidoglycan teichoic acid transferase TagT (322 aa).

At 1–19 (MEERSQRRKKKRKLKKWVK) the chain is on the cytoplasmic side. The chain crosses the membrane as a helical; Signal-anchor for type II membrane protein span at residues 20–40 (VVAGLMAFLVIAAGSVGAYAF). Over 41-322 (VKLNNASKEA…KKELQNDLGV (282 aa)) the chain is Extracellular.

This sequence belongs to the LytR/CpsA/Psr (LCP) family. As to quaternary structure, interacts with MreB.

Its subcellular location is the cell membrane. Its pathway is cell wall biogenesis. Its function is as follows. May catalyze the final step in cell wall teichoic acid biosynthesis, the transfer of the anionic cell wall polymers (APs) from their lipid-linked precursor to the cell wall peptidoglycan (PG). In Bacillus subtilis (strain 168), this protein is Polyisoprenyl-teichoic acid--peptidoglycan teichoic acid transferase TagT.